The chain runs to 546 residues: Arginine--tRNA ligase (546 aa).

A 'HIGH' region motif is present at residues 122–132 (ANPTGPFTVGH).

It belongs to the class-I aminoacyl-tRNA synthetase family. As to quaternary structure, monomer.

The protein localises to the cytoplasm. The catalysed reaction is tRNA(Arg) + L-arginine + ATP = L-arginyl-tRNA(Arg) + AMP + diphosphate. The sequence is that of Arginine--tRNA ligase (argS) from Thermotoga maritima (strain ATCC 43589 / DSM 3109 / JCM 10099 / NBRC 100826 / MSB8).